The following is a 219-amino-acid chain: EP300-interacting inhibitor of differentiation 2 (219 aa).

A disordered region spans residues 1 to 71; that stretch reads MSELPADQGV…PVPEAREGPM (71 aa). Over residues 20 to 34 the composition is skewed to basic and acidic residues; that stretch reads GDVRQAEVGGRRREP. Arginine 75 is modified (omega-N-methylarginine). The tract at residues 95 to 115 is disordered; that stretch reads AEPAEEEGPEGRPRSRPGNGP.

In terms of assembly, heterodimer with EID2B. Interacts with the C-terminus of EP300. Interacts with HDAC1 and HDAC2. Interacts with SMAD2, SMAD4 and with the MH2 domain of SMAD3.

It is found in the nucleus. Its function is as follows. Interacts with EP300 and acts as a repressor of MYOD-dependent transcription and muscle differentiation. Inhibits EP300 histone acetyltransferase activity. Acts as a repressor of TGFB/SMAD transcriptional responses. May act as a repressor of the TGFB/SMAD3-dependent signaling by selectively blocking formation of TGFB-induced SMAD3-SMAD4 complex. In Bos taurus (Bovine), this protein is EP300-interacting inhibitor of differentiation 2.